The chain runs to 195 residues: Molybdenum cofactor guanylyltransferase (195 aa).

GTP contacts are provided by residues 10–12 (LAG), lysine 23, asparagine 51, aspartate 69, and aspartate 99. Aspartate 99 lines the Mg(2+) pocket.

Belongs to the MobA family. As to quaternary structure, monomer. It depends on Mg(2+) as a cofactor.

Its subcellular location is the cytoplasm. It carries out the reaction Mo-molybdopterin + GTP + H(+) = Mo-molybdopterin guanine dinucleotide + diphosphate. Transfers a GMP moiety from GTP to Mo-molybdopterin (Mo-MPT) cofactor (Moco or molybdenum cofactor) to form Mo-molybdopterin guanine dinucleotide (Mo-MGD) cofactor. The polypeptide is Molybdenum cofactor guanylyltransferase (Yersinia pestis bv. Antiqua (strain Antiqua)).